The sequence spans 86 residues: MIRMDTVTDLSLREIGVAATKVLGRAVEVRAESHIGRDLAVDSLALMNIIMELEDTFDISIPLDRLASVETAGDLSKLINDLRTRA.

The Carrier domain maps to 6-83 (TVTDLSLREI…DLSKLINDLR (78 aa)). Serine 43 carries the post-translational modification O-(pantetheine 4'-phosphoryl)serine.

It belongs to the acyl carrier protein (ACP) family.

The protein operates within lipid metabolism; sphingolipid metabolism. Functionally, involved in de novo bacterial ceramide synthesis. The polypeptide is Probable acyl carrier protein CCNA_01221 (Caulobacter vibrioides (strain NA1000 / CB15N) (Caulobacter crescentus)).